Consider the following 218-residue polypeptide: Imidazole glycerol phosphate synthase subunit HisH (218 aa).

Residues 7 to 211 enclose the Glutamine amidotransferase type-1 domain; that stretch reads STVIIDTGCA…LALDKASLDA (205 aa). The active-site Nucleophile is C82. Active-site residues include H186 and E188.

As to quaternary structure, heterodimer of HisH and HisF.

The protein resides in the cytoplasm. The catalysed reaction is 5-[(5-phospho-1-deoxy-D-ribulos-1-ylimino)methylamino]-1-(5-phospho-beta-D-ribosyl)imidazole-4-carboxamide + L-glutamine = D-erythro-1-(imidazol-4-yl)glycerol 3-phosphate + 5-amino-1-(5-phospho-beta-D-ribosyl)imidazole-4-carboxamide + L-glutamate + H(+). The enzyme catalyses L-glutamine + H2O = L-glutamate + NH4(+). Its pathway is amino-acid biosynthesis; L-histidine biosynthesis; L-histidine from 5-phospho-alpha-D-ribose 1-diphosphate: step 5/9. Its function is as follows. IGPS catalyzes the conversion of PRFAR and glutamine to IGP, AICAR and glutamate. The HisH subunit catalyzes the hydrolysis of glutamine to glutamate and ammonia as part of the synthesis of IGP and AICAR. The resulting ammonia molecule is channeled to the active site of HisF. This chain is Imidazole glycerol phosphate synthase subunit HisH, found in Shewanella sediminis (strain HAW-EB3).